The primary structure comprises 251 residues: Flap endonuclease Xni (251 aa).

Position 104 (Asp-104) interacts with Mg(2+). Residues 160–249 (VQPQQLPDYW…IDGNLQQLRL (90 aa)) form the 5'-3' exonuclease domain. Residues Leu-171, Ala-172, Pro-180, Val-182, and Ile-185 each coordinate K(+). The segment at 184 to 189 (GIGPKS) is interaction with DNA.

Belongs to the Xni family. Mg(2+) serves as cofactor. Requires K(+) as cofactor.

Has flap endonuclease activity. During DNA replication, flap endonucleases cleave the 5'-overhanging flap structure that is generated by displacement synthesis when DNA polymerase encounters the 5'-end of a downstream Okazaki fragment. This is Flap endonuclease Xni from Shigella flexneri serotype 5b (strain 8401).